A 353-amino-acid polypeptide reads, in one-letter code: Protein-glutamate methylesterase/protein-glutamine glutaminase 3 (353 aa).

The Response regulatory domain occupies 3–120; it reads KVLIADDSAL…SSSSDMKKVA (118 aa). A 4-aspartylphosphate modification is found at Asp-54. Residues 158–353 enclose the CheB-type methylesterase domain; sequence PRPGREVTKA…AREIIRAVNR (196 aa). Catalysis depends on residues Ser-173, His-200, and Asp-296.

This sequence belongs to the CheB family. Post-translationally, phosphorylated by CheA. Phosphorylation of the N-terminal regulatory domain activates the methylesterase activity.

The protein resides in the cytoplasm. It catalyses the reaction [protein]-L-glutamate 5-O-methyl ester + H2O = L-glutamyl-[protein] + methanol + H(+). The enzyme catalyses L-glutaminyl-[protein] + H2O = L-glutamyl-[protein] + NH4(+). Its function is as follows. Involved in chemotaxis. Part of a chemotaxis signal transduction system that modulates chemotaxis in response to various stimuli. Catalyzes the demethylation of specific methylglutamate residues introduced into the chemoreceptors (methyl-accepting chemotaxis proteins or MCP) by CheR. Also mediates the irreversible deamidation of specific glutamine residues to glutamic acid. In Syntrophomonas wolfei subsp. wolfei (strain DSM 2245B / Goettingen), this protein is Protein-glutamate methylesterase/protein-glutamine glutaminase 3.